We begin with the raw amino-acid sequence, 221 residues long: ATP-dependent Clp protease proteolytic subunit 1, mitochondrial (221 aa).

A mitochondrion-targeting transit peptide spans 1–25; sequence MLRRLVTSSLSASRSMSASVQSRVG. The active-site Nucleophile is S120. H145 is an active-site residue.

Belongs to the peptidase S14 family. Tetradecamer that assembles into a two heptameric rings with a central cavity. Expressed in the intestine.

The protein localises to the mitochondrion matrix. It carries out the reaction Hydrolysis of proteins to small peptides in the presence of ATP and magnesium. alpha-casein is the usual test substrate. In the absence of ATP, only oligopeptides shorter than five residues are hydrolyzed (such as succinyl-Leu-Tyr-|-NHMec, and Leu-Tyr-Leu-|-Tyr-Trp, in which cleavage of the -Tyr-|-Leu- and -Tyr-|-Trp bonds also occurs).. Its function is as follows. Clp cleaves peptides in various proteins in a process that requires ATP hydrolysis. Clp may be responsible for a fairly general and central housekeeping function rather than for the degradation of specific substrates. The polypeptide is ATP-dependent Clp protease proteolytic subunit 1, mitochondrial (clpp-1) (Caenorhabditis elegans).